The following is a 566-amino-acid chain: Putative UDP-glucuronate:xylan alpha-glucuronosyltransferase 5 (566 aa).

The chain crosses the membrane as a helical; Signal-anchor for type II membrane protein span at residues 17-37 (LILISLSFLGLLLNFKPLFLL). Residues D372 and D374 each contribute to the Mn(2+) site. Substrate is bound by residues 372–374 (DAD), 401–403 (NSG), 428–432 (NGGDQ), and 475–480 (HYLGLK). A Mn(2+)-binding site is contributed by H475.

This sequence belongs to the glycosyltransferase 8 family. Glycogenin subfamily. It depends on Mn(2+) as a cofactor.

Its subcellular location is the golgi apparatus membrane. Functionally, may be involved in the substitutions of the xylan backbone in stem glucuronoxylan. The sequence is that of Putative UDP-glucuronate:xylan alpha-glucuronosyltransferase 5 (GUX5) from Arabidopsis thaliana (Mouse-ear cress).